The sequence spans 444 residues: Spermatogenesis-associated protein 1 (444 aa).

Residues 268–403 (SLLKIEREKI…RKLDTDKMKL (136 aa)) are a coiled coil.

In terms of assembly, interacts with IFT20. Highly abundant in the testis, and is also expressed in the heart and kidney (at protein level).

It is found in the cytoplasmic vesicle. It localises to the secretory vesicle. The protein localises to the acrosome. In Mus musculus (Mouse), this protein is Spermatogenesis-associated protein 1 (Spata1).